A 252-amino-acid polypeptide reads, in one-letter code: MGQKVHPTGFRLGIIKDWTSRWYDDGPVIAEKIKQDQVIRNYVNTRLKKERAGVARIVIERTTKHIKINIFAARPGAVVGRKGEEINNLSQELNRITGKEVKIDVVEVVKPEVEAQLIGENIAYQLENRVSFRRAMKQAIQQAMRAGAEGIRIRCAGRLGGVEIARSEQYKEGKIPLHTIRANVDYASVTAHTIAGAIGIKVWVYKGEVLVQRIDAVEEEEMKKIRDRRNDQRSRGGRDSRNKRRRRPKNTA.

One can recognise a KH type-2 domain in the interval 39–109 (IRNYVNTRLK…EVKIDVVEVV (71 aa)). Residues 222-240 (MKKIRDRRNDQRSRGGRDS) are compositionally biased toward basic and acidic residues. The interval 222–252 (MKKIRDRRNDQRSRGGRDSRNKRRRRPKNTA) is disordered. A compositionally biased stretch (basic residues) spans 241-252 (RNKRRRRPKNTA).

This sequence belongs to the universal ribosomal protein uS3 family. As to quaternary structure, part of the 30S ribosomal subunit. Forms a tight complex with proteins S10 and S14.

Binds the lower part of the 30S subunit head. Binds mRNA in the 70S ribosome, positioning it for translation. In Chlorobium phaeobacteroides (strain BS1), this protein is Small ribosomal subunit protein uS3.